Here is a 333-residue protein sequence, read N- to C-terminus: Geranylgeranyl pyrophosphate synthase olcC (333 aa).

3 residues coordinate isopentenyl diphosphate: Lys61, Arg64, and His93. Mg(2+) contacts are provided by Asp100 and Asp104. Arg109 lines the dimethylallyl diphosphate pocket. Arg110 serves as a coordination point for isopentenyl diphosphate. 3 residues coordinate dimethylallyl diphosphate: Lys187, Thr188, and Gln221. Mg(2+) is bound at residue Asp224. Dimethylallyl diphosphate is bound by residues Asn228, Lys238, and Lys248.

The protein belongs to the FPP/GGPP synthase family. Requires Mg(2+) as cofactor.

The catalysed reaction is isopentenyl diphosphate + dimethylallyl diphosphate = (2E)-geranyl diphosphate + diphosphate. It catalyses the reaction isopentenyl diphosphate + (2E)-geranyl diphosphate = (2E,6E)-farnesyl diphosphate + diphosphate. It carries out the reaction isopentenyl diphosphate + (2E,6E)-farnesyl diphosphate = (2E,6E,10E)-geranylgeranyl diphosphate + diphosphate. It participates in secondary metabolite biosynthesis; terpenoid biosynthesis. Its function is as follows. Geranylgeranyl pyrophosphate synthase; part of the gene cluster that mediates the biosynthesis of 15-deoxyoxalicine B. The first step of the pathway is the synthesis of nicotinyl-CoA from nicotinic acid by the nicotinic acid-CoA ligase olcI. Nicotinyl-CoA is then a substrate of polyketide synthase olcA to produce 4-hydroxy-6-(3-pyridinyl)-2H-pyran-2-one (HPPO) which is further prenylated by the polyprenyl transferase olcH to yield geranylgeranyl-HPPO. Geranylgeranyl pyrophosphate is provided by the cluster-specific geranylgeranyl pyrophosphate synthase olcC. The FAD-dependent monooxygenase olcE catalyzes the epoxidation of geranylgeranyl-HPPO and the terpene cyclase olcD catalyzes the cyclization of the terpenoid component, resulting in the formation of the tricyclic terpene moiety seen in predecaturin E. The cytochrome P450 monooxygenase then catalyzes the allylic oxidation of predecaturin E, which is followed by spirocylization with concomitant loss of one molecule of water to form decaturin E. Decaturin E is the substrate of the cytochrome P450 monooxygenase olcJ which hydroxylates it at the C-29 position to form decaturin F. The short-chain dehydrogenase/reductase olcF may catalyze the oxidation of decaturin F to generate the 29-hydroxyl-27-one intermediate, and subsequent hemiacetal formation probably leads to the formation of decaturin C. The dioxygenase olcK may be a peroxisomal enzyme that catalyzes the hydroxylation of decaturin C into decaturin A once decaturin C is shuttled into the peroxisome by the MFS transporter olcL. Finally the cytochrome P450 monooxygenase olcB catalyzes the oxidative rearrangement to yield 15-deoxyoxalicine B. In the absence of olcJ, decaturin E may be shunted to a pathway in which it is oxidized to a ketone, possibly by olcF, to form decaturin D, which undergoes further allylic oxidation to yield decaturin G. Moreover, in the absence of oclK or oclL, oclB can convert decaturin C into 15-deoxyoxalicine A. This Penicillium canescens protein is Geranylgeranyl pyrophosphate synthase olcC.